Consider the following 882-residue polypeptide: Valine--tRNA ligase (882 aa).

A 'HIGH' region motif is present at residues 48 to 58; that stretch reads PNVTGKLHLGH. The 'KMSKS' region signature appears at 524-528; that stretch reads KMSKS. Position 527 (K527) interacts with ATP. The stretch at 809–882 forms a coiled coil; it reads LAELLDLDEE…KRLAELKAAR (74 aa). The disordered stretch occupies residues 844-866; the sequence is GFTDRAPEKVVQEERDKQADYEQ. A compositionally biased stretch (basic and acidic residues) spans 845–863; it reads FTDRAPEKVVQEERDKQAD.

This sequence belongs to the class-I aminoacyl-tRNA synthetase family. ValS type 1 subfamily. As to quaternary structure, monomer.

It localises to the cytoplasm. The enzyme catalyses tRNA(Val) + L-valine + ATP = L-valyl-tRNA(Val) + AMP + diphosphate. Functionally, catalyzes the attachment of valine to tRNA(Val). As ValRS can inadvertently accommodate and process structurally similar amino acids such as threonine, to avoid such errors, it has a 'posttransfer' editing activity that hydrolyzes mischarged Thr-tRNA(Val) in a tRNA-dependent manner. The protein is Valine--tRNA ligase of Latilactobacillus sakei subsp. sakei (strain 23K) (Lactobacillus sakei subsp. sakei).